Consider the following 281-residue polypeptide: ATP synthase gamma chain (281 aa).

This sequence belongs to the ATPase gamma chain family. In terms of assembly, F-type ATPases have 2 components, CF(1) - the catalytic core - and CF(0) - the membrane proton channel. CF(1) has five subunits: alpha(3), beta(3), gamma(1), delta(1), epsilon(1). CF(0) has three main subunits: a, b and c.

The protein localises to the cell membrane. Produces ATP from ADP in the presence of a proton gradient across the membrane. The gamma chain is believed to be important in regulating ATPase activity and the flow of protons through the CF(0) complex. The sequence is that of ATP synthase gamma chain from Desulfitobacterium hafniense (strain DSM 10664 / DCB-2).